The primary structure comprises 397 residues: Polygalacturonase (397 aa).

A signal peptide spans 1-22 (MGSYLGIYTILVLCLLGYSANA). PbH1 repeat units lie at residues 169 to 195 (GKNMTFDNIKIIAPAESPNTDGIHLGR), 196 to 217 (CEGVKILNTKIATGDDCISVGD), 219 to 239 (MKNLLIEKVVCGPGHGISVGS), and 249 to 270 (VTDITVKNCTLEGTSNGLRIKT). An N-linked (GlcNAc...) asparagine glycan is attached at Asn-171. The active-site Proton donor is the Asp-210. An intrachain disulfide couples Cys-212 to Cys-229. The active site involves His-233. Residue Asn-256 is glycosylated (N-linked (GlcNAc...) asparagine). 2 disulfide bridges follow: Cys-341/Cys-347 and Cys-370/Cys-386.

Belongs to the glycosyl hydrolase 28 family. Pollen.

It localises to the secreted. The protein localises to the cell wall. The catalysed reaction is (1,4-alpha-D-galacturonosyl)n+m + H2O = (1,4-alpha-D-galacturonosyl)n + (1,4-alpha-D-galacturonosyl)m.. Its function is as follows. May function in depolymerizing pectin during pollen development, germination, and tube growth. This Brassica napus (Rape) protein is Polygalacturonase.